Reading from the N-terminus, the 963-residue chain is Aminopeptidase N (963 aa).

Topologically, residues 2–8 are cytoplasmic; that stretch reads AKGFYIS. The chain crosses the membrane as a helical; Signal-anchor for type II membrane protein span at residues 9–32; that stretch reads KALGILGILLGVAAVATIIALSVV. The tract at residues 33–64 is cytosolic Ser/Thr-rich junction; it reads YAQEKNKNAEHVPQAPTSPTITTTAAITLDQS. At 33 to 963 the chain is on the extracellular side; it reads YAQEKNKNAE…VVLNWFIEHS (931 aa). The tract at residues 65–963 is metalloprotease; it reads KPWNRYRLPT…VVLNWFIEHS (899 aa). N-linked (GlcNAc...) asparagine glycans are attached at residues Asn-82 and Asn-124. Tyr-171 bears the Sulfotyrosine mark. Asn-229, Asn-237, Asn-258, Asn-286, Asn-314, and Asn-328 each carry an N-linked (GlcNAc...) asparagine glycan. 347–351 lines the substrate pocket; it reads GAMEN. His-383 provides a ligand contact to Zn(2+). Catalysis depends on Glu-384, which acts as the Proton acceptor. Positions 387 and 406 each coordinate Zn(2+). Residues Asn-506, Asn-556, Asn-569, Asn-622, Asn-646, and Asn-736 are each glycosylated (N-linked (GlcNAc...) asparagine). The tract at residues 717 to 813 is interaction with TGEV spike glycoprotein; that stretch reads KYLRKQVEPL…DQWDFAWGQL (97 aa). Disulfide bonds link Cys-758–Cys-765 and Cys-795–Cys-831.

Belongs to the peptidase M1 family. Homodimer. Interacts with SLC6A19. In terms of assembly, (Microbial infection) Interacts with TGEV and PRCoV spike glycoprotein. The cofactor is Zn(2+). Post-translationally, sulfated. N- and O-glycosylated. In terms of processing, may undergo proteolysis and give rise to a soluble form.

Its subcellular location is the cell membrane. The catalysed reaction is Release of an N-terminal amino acid, Xaa-|-Yaa- from a peptide, amide or arylamide. Xaa is preferably Ala, but may be most amino acids including Pro (slow action). When a terminal hydrophobic residue is followed by a prolyl residue, the two may be released as an intact Xaa-Pro dipeptide.. Functionally, broad specificity aminopeptidase which plays a role in the final digestion of peptides generated from hydrolysis of proteins by gastric and pancreatic proteases. Also involved in the processing of various peptides including peptide hormones, such as angiotensin III and IV, neuropeptides, and chemokines. May also be involved the cleavage of peptides bound to major histocompatibility complex class II molecules of antigen presenting cells. May have a role in angiogenesis and promote cholesterol crystallization. It is able to degrade Leu-enkephalin and Met-enkephalin but not cholecystokinin CCK8, neuromedin C (GRP-10), somatostatin-14, substance P and vasoactive intestinal peptide. May have a role in amino acid transport by acting as binding partner of amino acid transporter SLC6A19 and regulating its activity. In terms of biological role, (Microbial infection) In case of porcine transmissible gastroenteritis coronavirus (TGEV) and porcine respiratory coronavirus (PRCoV) infections, serves as a receptor for TGEV and PRCoV spike glycoprotein in a species-specific manner. In Sus scrofa (Pig), this protein is Aminopeptidase N (ANPEP).